The primary structure comprises 172 residues: NADH-ubiquinone oxidoreductase chain 6 (172 aa).

5 helical membrane passes run 1-21 (MTYFVLFLGLCFVLGGLAVAS), 27-47 (YGVVGLVLASVAGCGWLLSLG), 48-68 (ISFVSLVLFMVYLGGMLVVFV), 87-107 (VVGYGMGFVAVLVAGVVVGGF), and 138-158 (CGVGMFLAAGWGLLLTLFVVL).

The protein belongs to the complex I subunit 6 family.

Its subcellular location is the mitochondrion membrane. It catalyses the reaction a ubiquinone + NADH + 5 H(+)(in) = a ubiquinol + NAD(+) + 4 H(+)(out). Its function is as follows. Core subunit of the mitochondrial membrane respiratory chain NADH dehydrogenase (Complex I) that is believed to belong to the minimal assembly required for catalysis. Complex I functions in the transfer of electrons from NADH to the respiratory chain. The immediate electron acceptor for the enzyme is believed to be ubiquinone. The polypeptide is NADH-ubiquinone oxidoreductase chain 6 (MT-ND6) (Uria aalge (Common mure)).